Here is a 116-residue protein sequence, read N- to C-terminus: Hydrogenase maturation factor HypA (116 aa).

H2 contacts Ni(2+). The Zn(2+) site is built by C73, C76, C90, and C93.

It belongs to the HypA/HybF family.

Its function is as follows. Involved in the maturation of [NiFe] hydrogenases. Required for nickel insertion into the metal center of the hydrogenase. In Escherichia coli O6:H1 (strain CFT073 / ATCC 700928 / UPEC), this protein is Hydrogenase maturation factor HypA.